A 609-amino-acid polypeptide reads, in one-letter code: Elongation factor 4 (609 aa).

Residues 11-193 (SRIRNFSIIA…QIVEKVPAPS (183 aa)) enclose the tr-type G domain. GTP is bound by residues 23-28 (DHGKST) and 140-143 (NKID).

The protein belongs to the TRAFAC class translation factor GTPase superfamily. Classic translation factor GTPase family. LepA subfamily.

The protein resides in the cell membrane. The catalysed reaction is GTP + H2O = GDP + phosphate + H(+). In terms of biological role, required for accurate and efficient protein synthesis under certain stress conditions. May act as a fidelity factor of the translation reaction, by catalyzing a one-codon backward translocation of tRNAs on improperly translocated ribosomes. Back-translocation proceeds from a post-translocation (POST) complex to a pre-translocation (PRE) complex, thus giving elongation factor G a second chance to translocate the tRNAs correctly. Binds to ribosomes in a GTP-dependent manner. In Halalkalibacterium halodurans (strain ATCC BAA-125 / DSM 18197 / FERM 7344 / JCM 9153 / C-125) (Bacillus halodurans), this protein is Elongation factor 4.